The following is a 550-amino-acid chain: MASSRILITSALPYANGPLHFGHITGAYLPADVYARFQRLLGKEVLYICGSDEYGIAITLNAELAGMGYQEYVDMYHKLHKDTLKKLGISVDFFSRTTNPHHPAIVQDFYRNLQDKGLMENLVTDQLYSEEEEKFLADRYVVGTCPKCGFDRARGDECQQCGADYEARDLKDPRSKLTGKALSLRETEHAYFHLERMKEELLTFVEGIYLRPHMRNFVIDYIKNLRPRAVTRDLSWGVPVPGLENKVFYVWFDAPIGYISGTMDWAASIGDPDAWKKFWLDDKVTYTQFVGKDNTSFHSVIFPAMEMGQSLPYKKVDALVTSEFLLLEGFQFSKSEGNIIDMDAFLETYSLDKLRYVLAAIAPETSDSEFAFQEFKTRCNSDLVGKFGNFVNRVVAFAAKNGCTELSHPQLEQQDLEFIAEAQKLAKEAADHYQQYSLRKACSTIMELAALGNGYFNDQAPWKLAKEDLWNRVRSILFCACYCQKLLALISYPIMPETAWTIWGMIAPGSLDLRSQDPERLQSIWTEAFFDYSEESFSLKEPELLFTVVE.

Residues 13–23 (PYANGPLHFGH) carry the 'HIGH' region motif. Residues Cys-145, Cys-148, Cys-158, and Cys-161 each contribute to the Zn(2+) site. The short motif at 331–335 (QFSKS) is the 'KMSKS' region element. Lys-334 contributes to the ATP binding site.

It belongs to the class-I aminoacyl-tRNA synthetase family. MetG type 1 subfamily. Monomer. Requires Zn(2+) as cofactor.

The protein localises to the cytoplasm. The enzyme catalyses tRNA(Met) + L-methionine + ATP = L-methionyl-tRNA(Met) + AMP + diphosphate. Functionally, is required not only for elongation of protein synthesis but also for the initiation of all mRNA translation through initiator tRNA(fMet) aminoacylation. The polypeptide is Methionine--tRNA ligase (metG) (Chlamydia muridarum (strain MoPn / Nigg)).